An 859-amino-acid chain; its full sequence is Bifunctional heparan sulfate N-deacetylase/N-sulfotransferase 1 (859 aa).

Topologically, residues 1 to 13 (MIITPYLNPRLVK) are cytoplasmic. The chain crosses the membrane as a helical; Signal-anchor for type II membrane protein span at residues 14–34 (PLKWLAIIILLYFLYFSLFSI). The tract at residues 34 to 575 (INKKPGKPRK…PRHQAILPPS (542 aa)) is heparan sulfate N-deacetylase 1. Residues 35 to 859 (NKKPGKPRKP…WLEEAVRIRV (825 aa)) lie on the Lumenal side of the membrane. N-linked (GlcNAc...) asparagine glycosylation is found at Asn-50, Asn-74, Asn-210, Asn-262, Asn-378, and Asn-429. The segment at 576 to 859 (MSCSKKSLPD…WLEEAVRIRV (284 aa)) is heparan sulfate N-sulfotransferase 1. Lys-593 acts as the For sulfotransferase activity in catalysis. 593-597 (KTGST) is a binding site for 3'-phosphoadenylyl sulfate. 2 N-linked (GlcNAc...) asparagine glycosylation sites follow: Asn-608 and Asn-643. Residue Ser-687 coordinates 3'-phosphoadenylyl sulfate. An N-linked (GlcNAc...) asparagine glycan is attached at Asn-715. Residues Cys-796 and Cys-805 are joined by a disulfide bond. 810-814 (KGRKY) serves as a coordination point for 3'-phosphoadenylyl sulfate.

This sequence belongs to the sulfotransferase 1 family. NDST subfamily. Monomer.

It localises to the golgi apparatus membrane. The enzyme catalyses alpha-D-glucosaminyl-[heparan sulfate](n) + 3'-phosphoadenylyl sulfate = N-sulfo-alpha-D-glucosaminyl-[heparan sulfate](n) + adenosine 3',5'-bisphosphate + 2 H(+). The protein operates within glycan metabolism; heparan sulfate biosynthesis. It participates in glycan metabolism; heparin biosynthesis. Essential bifunctional enzyme that catalyzes both the N-deacetylation and the N-sulfation of glucosamine (GlcNAc) of the glycosaminoglycan in heparan sulfate. Modifies the GlcNAc-GlcA disaccharide repeating sugar backbone to make N-sulfated heparosan, a prerequisite substrate for later modifications in heparin biosynthesis. This chain is Bifunctional heparan sulfate N-deacetylase/N-sulfotransferase 1 (hst-1), found in Caenorhabditis briggsae.